A 194-amino-acid chain; its full sequence is Fe/S biogenesis protein NfuA (194 aa).

Residues Cys152 and Cys155 each coordinate [4Fe-4S] cluster.

The protein belongs to the NfuA family. As to quaternary structure, homodimer. It depends on [4Fe-4S] cluster as a cofactor.

In terms of biological role, involved in iron-sulfur cluster biogenesis. Binds a 4Fe-4S cluster, can transfer this cluster to apoproteins, and thereby intervenes in the maturation of Fe/S proteins. Could also act as a scaffold/chaperone for damaged Fe/S proteins. In Azotobacter vinelandii (strain DJ / ATCC BAA-1303), this protein is Fe/S biogenesis protein NfuA.